The sequence spans 474 residues: uncharacterized protein (474 aa).

A helical transmembrane segment spans residues 3 to 23 (LTLWLVLGAVGVGAVGTGVGF). Positions 171–296 (VSDGSSSKTR…KETKDRTKVD (126 aa)) are disordered. Over residues 180-210 (RTPKKTKTSKKKPIKKKSSKSKSSKGSKKQK) the composition is skewed to basic residues. The segment covering 231–253 (TRSQSKQQKGQEQATDQTDSEGV) has biased composition (polar residues). The segment covering 257-266 (EGADNTDTEL) has biased composition (acidic residues). Low complexity predominate over residues 267 to 281 (VETTAETTEQEATTK). Over residues 282–296 (STKDTKETKDRTKVD) the composition is skewed to basic and acidic residues.

The protein localises to the membrane. This is an uncharacterized protein from Mycoplasma pneumoniae (strain ATCC 29342 / M129 / Subtype 1) (Mycoplasmoides pneumoniae).